The following is a 159-amino-acid chain: Globin CTT-W (159 aa).

Residues 1-16 (MKFLVILTLCIAGAIA) form the signal peptide. In terms of domain architecture, Globin spans 17-159 (HCDKAPFIKA…HHAIVYSILE (143 aa)). Residues histidine 73 and histidine 108 each coordinate heme b.

The protein belongs to the globin family.

The chain is Globin CTT-W (CTT-W) from Chironomus thummi piger (Midge).